The chain runs to 327 residues: uncharacterized protein (327 aa).

Topologically, residues 1–19 are cytoplasmic; that stretch reads MSIAQDRGIVFKLLSIYRA. Residues 20–40 form a helical membrane-spanning segment; that stretch reads AAGIFMALAQLIVIFFGYCDF. Topologically, residues 41 to 51 are extracellular; that stretch reads KIKGYRIASYN. The chain crosses the membrane as a helical span at residues 52–72; it reads APTFASSFIILAVCLLLVVVL. Over 73–104 the chain is Cytoplasmic; the sequence is ENPEVKVTNSENSLFSALKQFFRVERKKLISC. A helical membrane pass occupies residues 105–125; that stretch reads LILLWSMFLSSFIMSEVVYFM. Residues 126-141 are Extracellular-facing; the sequence is PLFLTLHVNWDTKFQG. The helical transmembrane segment at 142 to 162 threads the bilayer; it reads IAFMVASILGVTGSYFAPKLI. Topologically, residues 163-199 are cytoplasmic; sequence NVGCSCGRAKDGGLEESDTTGSETVEVKKKDSLYSGQ. The helical transmembrane segment at 200–220 threads the bilayer; the sequence is VFLSIFALFVSLLGQAFMIGA. Residues 221 to 235 are Extracellular-facing; that stretch reads SEALKHKSMPPTNSG. Residues 236–256 traverse the membrane as a helical segment; the sequence is IFFSAGMSITLLGYNFLASSI. Over 257-275 the chain is Cytoplasmic; that stretch reads PALFSMYIDPKLKVQLMPS. A helical membrane pass occupies residues 276-296; it reads IGAISGIGKLVAPIVLAALYG. Topologically, residues 297–300 are extracellular; sequence TRLG. A helical transmembrane segment spans residues 301 to 321; it reads LSIAVGFGMILVAVSIPPLIW. Residues 322–327 lie on the Cytoplasmic side of the membrane; that stretch reads LRKKRC.

Its subcellular location is the membrane. This is an uncharacterized protein from Saccharomyces cerevisiae (strain ATCC 204508 / S288c) (Baker's yeast).